The sequence spans 139 residues: Large ribosomal subunit protein uL16 (139 aa).

The segment covering 1-16 has biased composition (basic residues); it reads MLIPKRTKYRKQHRPV. Positions 1–22 are disordered; sequence MLIPKRTKYRKQHRPVRSGMSK.

The protein belongs to the universal ribosomal protein uL16 family. Part of the 50S ribosomal subunit.

Binds 23S rRNA and is also seen to make contacts with the A and possibly P site tRNAs. The protein is Large ribosomal subunit protein uL16 of Bifidobacterium longum (strain DJO10A).